A 273-amino-acid chain; its full sequence is Zinc finger protein 80 (273 aa).

The C2H2-type 1 zinc-finger motif lies at 49–71 (YKCKECGSVFNKNSLLVRHQQIH). Residues 77–99 (YEYQECGKAFPEKVDFVRHMRIH) form a C2H2-type 2; degenerate zinc finger. The C2H2-type 3; atypical zinc-finger motif lies at 105–127 (CKCVECRKVFNRRSHLLCYRQIH). 4 consecutive C2H2-type zinc fingers follow at residues 133 to 155 (YECS…RVTH), 161 to 183 (FGCK…MKIH), 187 to 211 (KPCK…SMTH), and 217 to 239 (YECK…TRSH).

This sequence belongs to the krueppel C2H2-type zinc-finger protein family.

It localises to the nucleus. May be involved in transcriptional regulation. The protein is Zinc finger protein 80 (ZNF80) of Pan troglodytes (Chimpanzee).